The sequence spans 154 residues: Putative thioredoxin H10 (154 aa).

The region spanning 24 to 148 (NNNNSYGQTR…LQKKTAAAAD (125 aa)) is the Thioredoxin domain. Active-site nucleophile residues include cysteine 74 and cysteine 77. The cysteines at positions 74 and 77 are disulfide-linked.

Belongs to the thioredoxin family.

The protein resides in the cytoplasm. Functionally, probable thiol-disulfide oxidoreductase that may be involved in the redox regulation of a number of cytosolic enzymes. The chain is Putative thioredoxin H10 from Arabidopsis thaliana (Mouse-ear cress).